A 361-amino-acid polypeptide reads, in one-letter code: Phosphoserine aminotransferase (361 aa).

Arginine 42 contributes to the L-glutamate binding site. Residues 76-77, tryptophan 102, threonine 153, aspartate 173, and glutamine 196 each bind pyridoxal 5'-phosphate; that span reads AR. At lysine 197 the chain carries N6-(pyridoxal phosphate)lysine. 238–239 lines the pyridoxal 5'-phosphate pocket; it reads NT.

This sequence belongs to the class-V pyridoxal-phosphate-dependent aminotransferase family. SerC subfamily. Homodimer. Pyridoxal 5'-phosphate serves as cofactor.

It is found in the cytoplasm. The catalysed reaction is O-phospho-L-serine + 2-oxoglutarate = 3-phosphooxypyruvate + L-glutamate. It catalyses the reaction 4-(phosphooxy)-L-threonine + 2-oxoglutarate = (R)-3-hydroxy-2-oxo-4-phosphooxybutanoate + L-glutamate. It participates in amino-acid biosynthesis; L-serine biosynthesis; L-serine from 3-phospho-D-glycerate: step 2/3. The protein operates within cofactor biosynthesis; pyridoxine 5'-phosphate biosynthesis; pyridoxine 5'-phosphate from D-erythrose 4-phosphate: step 3/5. Functionally, catalyzes the reversible conversion of 3-phosphohydroxypyruvate to phosphoserine and of 3-hydroxy-2-oxo-4-phosphonooxybutanoate to phosphohydroxythreonine. In Yersinia pseudotuberculosis serotype IB (strain PB1/+), this protein is Phosphoserine aminotransferase.